We begin with the raw amino-acid sequence, 471 residues long: Tryptophanase (471 aa).

Residues K5, K115, and K156 each carry the N6-acetyllysine modification. K270 bears the N6-(pyridoxal phosphate)lysine mark. An N6-acetyllysine modification is found at K450.

Belongs to the beta-eliminating lyase family. Homotetramer. Requires pyridoxal 5'-phosphate as cofactor.

It catalyses the reaction L-tryptophan + H2O = indole + pyruvate + NH4(+). It participates in amino-acid degradation; L-tryptophan degradation via pyruvate pathway; indole and pyruvate from L-tryptophan: step 1/1. This chain is Tryptophanase, found in Escherichia coli (strain SMS-3-5 / SECEC).